A 1118-amino-acid polypeptide reads, in one-letter code: Phytochrome 1 (1118 aa).

Positions 1 to 10 (MSSTRHSYSS) are enriched in low complexity. Residues 1–23 (MSSTRHSYSSGGSGKSKHGRRIA) form a disordered region. Residues 212–391 (DIGLLCDSVV…VFSLQLNMEV (180 aa)) form the GAF domain. Phytochromobilin is bound at residue C317. PAS domains follow at residues 606 to 677 (VASE…LEGE) and 740 to 811 (DYKA…TKLM). The region spanning 887 to 1110 (YVKEELKKPL…LVTIQFPLAH (224 aa)) is the Histidine kinase domain.

It belongs to the phytochrome family. As to quaternary structure, homodimer. Post-translationally, contains one covalently linked phytochromobilin chromophore.

Regulatory photoreceptor which exists in two forms that are reversibly interconvertible by light: the Pr form that absorbs maximally in the red region of the spectrum and the Pfr form that absorbs maximally in the far-red region. Photoconversion of Pr to Pfr induces an array of morphogenic responses, whereas reconversion of Pfr to Pr cancels the induction of those responses. Pfr controls the expression of a number of nuclear genes including those encoding the small subunit of ribulose-bisphosphate carboxylase, chlorophyll A/B binding protein, protochlorophyllide reductase, rRNA, etc. It also controls the expression of its own gene(s) in a negative feedback fashion. In Adiantum capillus-veneris (Maidenhair fern), this protein is Phytochrome 1 (PHY1).